The sequence spans 130 residues: Small ribosomal subunit protein uS9 (130 aa).

It belongs to the universal ribosomal protein uS9 family.

The polypeptide is Small ribosomal subunit protein uS9 (Clostridium perfringens (strain ATCC 13124 / DSM 756 / JCM 1290 / NCIMB 6125 / NCTC 8237 / Type A)).